A 194-amino-acid chain; its full sequence is Peptidyl-tRNA hydrolase (194 aa).

Position 17 (Y17) interacts with tRNA. H22 serves as the catalytic Proton acceptor. TRNA is bound by residues Y68, N70, and N116.

The protein belongs to the PTH family. Monomer.

Its subcellular location is the cytoplasm. The catalysed reaction is an N-acyl-L-alpha-aminoacyl-tRNA + H2O = an N-acyl-L-amino acid + a tRNA + H(+). In terms of biological role, hydrolyzes ribosome-free peptidyl-tRNAs (with 1 or more amino acids incorporated), which drop off the ribosome during protein synthesis, or as a result of ribosome stalling. Catalyzes the release of premature peptidyl moieties from peptidyl-tRNA molecules trapped in stalled 50S ribosomal subunits, and thus maintains levels of free tRNAs and 50S ribosomes. The chain is Peptidyl-tRNA hydrolase from Pseudomonas savastanoi pv. phaseolicola (strain 1448A / Race 6) (Pseudomonas syringae pv. phaseolicola (strain 1448A / Race 6)).